We begin with the raw amino-acid sequence, 962 residues long: Voltage-gated delayed rectifier potassium channel KCNH1 (962 aa).

The Cytoplasmic segment spans residues 1–220 (MTMAGGRRGL…LHYCVFKTTW (220 aa)). A PAS domain is found at 14 to 94 (QNTFLENIVR…QTFENYEMNS (81 aa)). In terms of domain architecture, PAC spans 93-145 (NSFEILMYKKNRTPVWFFVKIAPIRNEQDKVVLFLCTFSDITAFKQPIEDDSC). The required for phosphatidylinositol bisphosphate binding stretch occupies residues 151–162 (FARLTRALTSSR). A helical transmembrane segment spans residues 221-241 (DWIILILTFYTAILVPYNVSF). Over 242–248 (KTRQNNV) the chain is Extracellular. The helical transmembrane segment at 249 to 269 (AWLVVDSIVDVIFLVDIVLNF) threads the bilayer. Over 270 to 290 (HTTFVGPAGEVISDPKLIRMN) the chain is Cytoplasmic. A helical transmembrane segment spans residues 291 to 309 (YLKTWFVIDLLSCLPYDVI). Residues 310–318 (NAFENVDEG) lie on the Extracellular side of the membrane. The helical; Voltage-sensor transmembrane segment at 319–341 (ISSLFSSLKVVRLLRLGRVARKL) threads the bilayer. Residues 342 to 350 (DHYIEYGAA) lie on the Cytoplasmic side of the membrane. The chain crosses the membrane as a helical span at residues 351-372 (VLVLLVCVFGLAAHWMACIWYS). The Extracellular segment spans residues 373-421 (IGDYEIFDEDTKTIRNNSWLYQLALDIGTPYQFNGSGSGKWEGGPSKNS). Residues asparagine 388 and asparagine 406 are each glycosylated (N-linked (GlcNAc...) asparagine). The pore-forming intramembrane region spans 422–443 (VYISSLYFTMTSLTSVGFGNIA). The Selectivity filter signature appears at 436–441 (SVGFGN). The Extracellular portion of the chain corresponds to 444–450 (PSTDIEK). The helical transmembrane segment at 451–471 (IFAVAIMMIGSLLYATIFGNV) threads the bilayer. At 472–962 (TTIFQQMYAN…ESDRDIFGAS (491 aa)) the chain is on the cytoplasmic side. Residues 646–743 (KRDALQKVLE…LDDLDVEKGN (98 aa)) are calmodulin-binding. Residues 672 to 674 (YNL) are interaction with cyclic nucleotide-binding pocket. A compositionally biased stretch (basic and acidic residues) spans 830-852 (ESMETLPERTKASGEATLKKTDS). Disordered regions lie at residues 830–859 (ESMETLPERTKASGEATLKKTDSCDSGITK) and 933–962 (SRGSSQSPQDTCEVSRPQSPESDRDIFGAS). Residues 897–937 (ATVLEVKHELKEDIKALNAKMTSIEKQLSEILRILMSRGSS) are CAD (involved in subunit assembly). A compositionally biased stretch (polar residues) spans 934 to 952 (RGSSQSPQDTCEVSRPQSP). Residues serine 947, serine 951, and serine 954 each carry the phosphoserine modification. Positions 953-962 (ESDRDIFGAS) are enriched in basic and acidic residues.

The protein belongs to the potassium channel family. H (Eag) (TC 1.A.1.20) subfamily. Kv10.1/KCNH1 sub-subfamily. In terms of assembly, homomultimer. The potassium channel is composed of a homo- or heterotetrameric complex of pore-forming alpha subunits that can associate with modulating beta subunits. Heteromultimer with KCNH5/EAG2. Interacts with ALG10B. Interacts with RABEP1. Interacts (via C-terminus) with CTTN. Interacts (via cytoplasmic region) with Ca(2+)-bound calmodulin. In terms of processing, channel activity is regulated via tyrosine phosphorylation/dephosphorylation by SRC and PTPN6. Detected in cerebellum, at parallel fiber synapses on Purkinje cell spines. Detected in hippocampus neurons (at protein level). Detected in brain, but not in the other tissues tested; expression is highest in granular cells of the dentate gyrus, in hippocampus CA3 pyramidal cells, and in cerebellar granule cells. Detected in pituitary.

It localises to the cell membrane. The protein resides in the nucleus inner membrane. The protein localises to the cell projection. Its subcellular location is the dendrite. It is found in the axon. It localises to the presynaptic cell membrane. The protein resides in the perikaryon. The protein localises to the postsynaptic density membrane. Its subcellular location is the early endosome membrane. The catalysed reaction is K(+)(in) = K(+)(out). Its activity is regulated as follows. Channel activity is inhibited by interaction with Ca(2+)-bound calmodulin. Interaction of a single pore-forming alpha subunit with a calmodulin chain is sufficient to promote channel closure. Channel activity is not regulated by cyclic nucleotides. Channel activity is inhibited by binding intracellular phosphatidylinositol-3,5-bisphosphate and phosphatidylinositol-4,5-bisphosphate (PIP2), but is not inhibited by phosphatidylinositol 4-phosphate. Functionally, pore-forming (alpha) subunit of a voltage-gated delayed rectifier potassium channel that mediates outward-rectifying potassium currents which, on depolarization, reaches a steady-state level and do not inactivate. The activation kinetics depend on the prepulse potential and external divalent cation concentration. With negative prepulses, the current activation is delayed and slowed down several fold, whereas more positive prepulses speed up activation. The time course of activation is biphasic with a fast and a slowly activating current component. Activates at more positive membrane potentials and exhibit a steeper activation curve. Channel properties are modulated by subunit assembly. Mediates IK(NI) current in myoblasts. Involved in the regulation of cell proliferation and differentiation, in particular adipogenic and osteogenic differentiation in bone marrow-derived mesenchymal stem cells (MSCs). In Rattus norvegicus (Rat), this protein is Voltage-gated delayed rectifier potassium channel KCNH1.